Here is a 375-residue protein sequence, read N- to C-terminus: tRNA-specific 2-thiouridylase MnmA (375 aa).

ATP-binding positions include glycine 16–serine 23 and methionine 42. Residues asparagine 102–aspartate 104 form an interaction with target base in tRNA region. Catalysis depends on cysteine 107, which acts as the Nucleophile. Cysteine 107 and cysteine 203 are disulfide-bonded. Position 131 (glycine 131) interacts with ATP. The segment at lysine 153 to glutamine 155 is interaction with tRNA. Cysteine 203 functions as the Cysteine persulfide intermediate in the catalytic mechanism. The segment at arginine 315 to tyrosine 316 is interaction with tRNA.

The protein belongs to the MnmA/TRMU family.

It is found in the cytoplasm. It catalyses the reaction S-sulfanyl-L-cysteinyl-[protein] + uridine(34) in tRNA + AH2 + ATP = 2-thiouridine(34) in tRNA + L-cysteinyl-[protein] + A + AMP + diphosphate + H(+). In terms of biological role, catalyzes the 2-thiolation of uridine at the wobble position (U34) of tRNA, leading to the formation of s(2)U34. The sequence is that of tRNA-specific 2-thiouridylase MnmA from Pseudomonas aeruginosa (strain LESB58).